The sequence spans 153 residues: Sperm surface protein Sp17 (153 aa).

The segment at 74–117 is disordered; sequence FKVPSGATESKEAPPEKSEPEKETPQEVVKEQETQVSFVEEVST. Residues 82–106 are compositionally biased toward basic and acidic residues; that stretch reads ESKEAPPEKSEPEKETPQEVVKEQE. An IQ domain is found at 122-151; sequence AAAAAVKIQAAFRGHKARKEVKIMKESSIE.

As to quaternary structure, homodimer. May interact with ROPN1. As to expression, testis- and sperm-specific.

The protein localises to the membrane. Functionally, sperm surface zona pellucida binding protein. Helps to bind spermatozoa to the zona pellucida with high affinity. Might function in binding zona pellucida and carbohydrates. This is Sperm surface protein Sp17 (SPA17) from Notamacropus eugenii (Tammar wallaby).